The following is a 268-amino-acid chain: MAVNVYSTSVTSDNLSRHDMLAWINESLQLNLTKIEQLCSGAAYCQFMDMLFPGSIALKKVKFQAKLEHEYIQNFKILQAGFKRMGVDKIIPVDKLVKGKFQDNFEFVQWFKKFFDANYDGKEYDPVAARQGQETAVAPSLVAPALSKPKKPLGSGSAAPQRPIATQRTTAAPKAGPGMVRKNPGMGNGDDEAAELMQQVKVLKLTVEDLEKERDFYFGKLRNIELICQENEGENDPVLQRIVDILYATDEGFVIPDEGGPQEEQEEY.

The residue at position 2 (Ala2) is an N-acetylalanine. The Calponin-homology (CH) domain occupies Asn14–Asp116. N6-crotonyllysine is present on Lys66. The residue at position 124 (Tyr124) is a Phosphotyrosine. An interaction with MTUS2/TIP150 region spans residues Tyr124–Tyr268. The segment at Leu146–Asp191 is disordered. Ser155 carries the phosphoserine modification. The EB1 C-terminal domain maps to Gly185–Ile255. The interval Thr206–Glu211 is interaction with APC. Residues Glu208–Tyr268 are DCTN1-binding. Lys220 carries the N6-acetyllysine modification. The interval Lys220–Ile242 is APC-binding. Positions Glu232–Ile255 are interaction with SKA1.

This sequence belongs to the MAPRE family. Homodimer. Heterodimer with MAPRE3. Interacts with DCTN1, DCTN2, TERF1 and dynein intermediate chain. Interaction with DIAPH1 and DIAPH2. Interacts (via C-terminal residues 206-211) with APC (via C-terminal residues 2674-2845); the interaction inhibits association with and bundling of F-actin. Interacts with CLASP2, DST, KIF2C and STIM1; probably required for their targeting to the growing microtubule plus ends. Interacts with MTUS2; interaction is direct and probably targets MTUS2 to microtubules. Interacts (via C-terminus) with SKA1 (via SXIP motif); the interaction is direct and stabilizes the kinetochore-microtubule attachment of the SKA1 complex. Interacts with APC2. Interacts with CLASP1. Interacts with CDK5RAP2. According to another report, MAPRE1 does not interact with CDK5RAP2. Interacts with MACF1. Interacts with RABL2/RABL2A; binds preferentially to GTP-bound RABL2. Interacts with KCNAB2. Interacts (via C-terminus) with CLIP1. Interacts with SLAIN2 and SLAIN1. Interacts with KIF18B; this interaction is required for efficient accumulation of KIF18B at microtubule plus ends. Interacts with MISP. Interacts with KNSTRN. Interacts with NCKAP5L. Interacts with AKAP9. Interacts with PDE4DIP; this interaction, which is PDE4DIP isoform-specific, is required for its recruitment to the Golgi apparatus. Interacts with CAMSAP2. May form a pericentrosomal complex with AKAP9, CDK5RAP2 and PDE4DIP isoform 2/MMG8/SMYLE; within this complex, MAPRE1 binding to CDK5RAP2 may be mediated by PDE4DIP. Contrary to other mammalian species, does not interact with CDK5RAP2, possibly due to the lack of conservation of the MAPRE1-binding motif in rat CDK5RAP2. Interacts with AKNA. Interacts with GAS2L1, GAS2L2, and GAS2L3. Interacts with RARRES1 and AGBL2. Acetylation at Lys-220 by KAT2B/PCAF promotes dynamic kinetochore-microtubule interactions in early mitosis. Post-translationally, crotonylated by KAT5 during mitosis, promoting astral microtubule plasticity and dynamic connection between astral microtubules and the cortex during mitotic chromosome segregation, thereby ensuring accurate spindle positioning in mitosis. Decrotonylated by HDAC3.

It localises to the cytoplasm. The protein resides in the cytoskeleton. It is found in the microtubule organizing center. The protein localises to the centrosome. Its subcellular location is the golgi apparatus. It localises to the spindle. The protein resides in the spindle pole. In terms of biological role, plus-end tracking protein (+TIP) that binds to the plus-end of microtubules and regulates the dynamics of the microtubule cytoskeleton. Recruits other +TIP proteins to microtubules by binding to a conserved Ser-X-Leu-Pro (SXLP) motif in their polypeptide chains. Promotes cytoplasmic microtubule nucleation and elongation. Involved in mitotic spindle positioning by stabilizing microtubules and promoting dynamic connection between astral microtubules and the cortex during mitotic chromosome segregation. Assists chromosome alignment in metaphase by recruiting the SKA complex to the spindle and stabilizing its interactions with microtubule bundles (K-fibers). Also acts as a regulator of minus-end microtubule organization: interacts with the complex formed by AKAP9 and PDE4DIP, leading to recruit CAMSAP2 to the Golgi apparatus, thereby tethering non-centrosomal minus-end microtubules to the Golgi, an important step for polarized cell movement. Promotes elongation of CAMSAP2-decorated microtubule stretches on the minus-end of microtubules. Acts as a regulator of autophagosome transport via interaction with CAMSAP2. Functions downstream of Rho GTPases and DIAPH1 in stable microtubule formation. May play a role in cell migration. The chain is Microtubule-associated protein RP/EB family member 1 (Mapre1) from Rattus norvegicus (Rat).